The sequence spans 228 residues: MAIEVSVLRVFTDSDGNFGNPLGVINASKVEHRDRQQLAAQSGYSETIFVDLPSPGSTTAHATIHTPRTEIPFAGHPTVGASWWLRERGTPINTLQVPAGIVQVSYHGDLTAISARSEWAPEFAIHDLDSLDALAAADPADFPDDIAHYLWTWTDRSAGSLRARMFAANLGVTEDEATGAAAIRITDYLSRDLTITQGKGSLIHTTWSPEGWVRVAGRVVSDGVAQLD.

This is an uncharacterized protein from Mycobacterium tuberculosis (strain CDC 1551 / Oshkosh).